The primary structure comprises 109 residues: Aquaporin-2 (109 aa).

Over 1–6 (SIAFSR) the chain is Cytoplasmic. Residues 7 to 27 (AVLAEFLATLLFVFFGLGSAL) traverse the membrane as a helical segment. The Extracellular segment spans residues 28–35 (NWPQAMPS). Residues 36-54 (VLQIAMAFGLAIGTLVQAL) form a helical membrane-spanning segment. At 55-59 (GHVSG) the chain is on the cytoplasmic side. Positions 60–69 (AHINPAVTVA) form an intramembrane region, discontinuously helical. Positions 63–65 (NPA) match the NPA 1 motif. At 70–80 (CLVGCHVSFLR) the chain is on the cytoplasmic side. A helical membrane pass occupies residues 81–102 (AAFYVAAQLLGAVAGAALLHEI). Over 103–109 (TPPDIRR) the chain is Extracellular.

It belongs to the MIP/aquaporin (TC 1.A.8) family. As to quaternary structure, homotetramer. In terms of processing, serine phosphorylation is necessary and sufficient for expression at the apical membrane. Endocytosis is not phosphorylation-dependent. N-glycosylated.

The protein localises to the apical cell membrane. It is found in the basolateral cell membrane. The protein resides in the cell membrane. It localises to the cytoplasmic vesicle membrane. Its subcellular location is the golgi apparatus. The protein localises to the trans-Golgi network membrane. It carries out the reaction H2O(in) = H2O(out). The catalysed reaction is glycerol(in) = glycerol(out). Functionally, forms a water-specific channel that provides the plasma membranes of renal collecting duct with high permeability to water, thereby permitting water to move in the direction of an osmotic gradient. Plays an essential role in renal water homeostasis. Could also be permeable to glycerol. The polypeptide is Aquaporin-2 (Equus caballus (Horse)).